Here is a 177-residue protein sequence, read N- to C-terminus: Peptide methionine sulfoxide reductase MsrA (177 aa).

The active site involves cysteine 11.

It belongs to the MsrA Met sulfoxide reductase family.

The enzyme catalyses L-methionyl-[protein] + [thioredoxin]-disulfide + H2O = L-methionyl-(S)-S-oxide-[protein] + [thioredoxin]-dithiol. It carries out the reaction [thioredoxin]-disulfide + L-methionine + H2O = L-methionine (S)-S-oxide + [thioredoxin]-dithiol. Functionally, has an important function as a repair enzyme for proteins that have been inactivated by oxidation. Catalyzes the reversible oxidation-reduction of methionine sulfoxide in proteins to methionine. This is Peptide methionine sulfoxide reductase MsrA from Picrophilus torridus (strain ATCC 700027 / DSM 9790 / JCM 10055 / NBRC 100828 / KAW 2/3).